Reading from the N-terminus, the 338-residue chain is Ketol-acid reductoisomerase (NADP(+)) (338 aa).

Residues M1–T181 enclose the KARI N-terminal Rossmann domain. Residues Y24–Q27, R47, S50, S52, and D82–Q85 each bind NADP(+). The active site involves H107. G133 contacts NADP(+). The KARI C-terminal knotted domain maps to N182–I327. 4 residues coordinate Mg(2+): D190, E194, E226, and E230. S251 lines the substrate pocket.

The protein belongs to the ketol-acid reductoisomerase family. The cofactor is Mg(2+).

It carries out the reaction (2R)-2,3-dihydroxy-3-methylbutanoate + NADP(+) = (2S)-2-acetolactate + NADPH + H(+). The enzyme catalyses (2R,3R)-2,3-dihydroxy-3-methylpentanoate + NADP(+) = (S)-2-ethyl-2-hydroxy-3-oxobutanoate + NADPH + H(+). The protein operates within amino-acid biosynthesis; L-isoleucine biosynthesis; L-isoleucine from 2-oxobutanoate: step 2/4. It functions in the pathway amino-acid biosynthesis; L-valine biosynthesis; L-valine from pyruvate: step 2/4. In terms of biological role, involved in the biosynthesis of branched-chain amino acids (BCAA). Catalyzes an alkyl-migration followed by a ketol-acid reduction of (S)-2-acetolactate (S2AL) to yield (R)-2,3-dihydroxy-isovalerate. In the isomerase reaction, S2AL is rearranged via a Mg-dependent methyl migration to produce 3-hydroxy-3-methyl-2-ketobutyrate (HMKB). In the reductase reaction, this 2-ketoacid undergoes a metal-dependent reduction by NADPH to yield (R)-2,3-dihydroxy-isovalerate. The chain is Ketol-acid reductoisomerase (NADP(+)) from Pelobacter propionicus (strain DSM 2379 / NBRC 103807 / OttBd1).